The following is a 365-amino-acid chain: MWLRSHRQLCLAFLLVCVLSVIFFLHIHQDSFPHGLGLSILCPDRRLVTPPVAIFCLPGTAMGPNASSSCPQHPASLSGTWTVYPNGRFGNQMGQYATLLALAQLNGRRAFILPAMHAALAPVFRITLPVLAPEVDSRTPWRELQLHDWMSEEYADLRDPFLKLSGFPCSWTFFHHLREQIRREFTLHDHLREEAQSVLGQLRLGRTGDRPRTFVGVHVRRGDYLQVMPQRWKGVVGDSAYLRQAMDWFRARHEAPVFVVTSNGMEWCKENIDTSQGDVTFAGDGQEATPWKDFALLTQCNHTIMTIGTFGFWAAYLAGGDTVYLANFTLPDSEFLKIFKPEAAFLPEWVGINADLSPLWTLAKP.

Residues 1–8 lie on the Cytoplasmic side of the membrane; the sequence is MWLRSHRQ. The helical; Signal-anchor for type II membrane protein transmembrane segment at 9 to 25 threads the bilayer; the sequence is LCLAFLLVCVLSVIFFL. Topologically, residues 26–365 are lumenal; that stretch reads HIHQDSFPHG…LSPLWTLAKP (340 aa). N-linked (GlcNAc...) asparagine glycosylation is found at Asn65 and Asn327.

Belongs to the glycosyltransferase 11 family.

It localises to the golgi apparatus. The protein resides in the golgi stack membrane. It catalyses the reaction a beta-D-galactosyl-(1-&gt;4)-N-acetyl-beta-D-glucosaminyl derivative + GDP-beta-L-fucose = an alpha-L-Fuc-(1-&gt;2)-beta-D-Gal-(1-&gt;4)-beta-D-GlcNAc derivative + GDP + H(+). The catalysed reaction is a ganglioside GA1 + GDP-beta-L-fucose = a ganglioside Fuc-GA1 + GDP + H(+). The enzyme catalyses a beta-D-Gal-(1-&gt;3)-beta-D-GlcNAc-(1-&gt;3)-beta-D-Gal-(1-&gt;4)-beta-D-Glc-(1&lt;-&gt;1')-Cer(d18:1(4E)) + GDP-beta-L-fucose = alpha-L-fucosyl-(1-&gt;2)- beta-D-galactosyl-(1-&gt;3)-N-acetyl-beta-D-glucosaminyl-(1-&gt;3)-beta-D-galactosyl-(1-&gt;4)-beta-D-glucosyl-(1&lt;-&gt;1')-N-acylsphing-4-enine + GDP + H(+). It carries out the reaction a neolactoside nLc4Cer(d18:1(4E)) + GDP-beta-L-fucose = a neolactoside IV(2)-alpha-Fuc-nLc4Cer(d18:1(4E)) + GDP + H(+). It catalyses the reaction a ganglioside GM1 + GDP-beta-L-fucose = a ganglioside Fuc-GM1 + GDP + H(+). The catalysed reaction is beta-D-galactosyl-(1-&gt;3)-N-acetyl-D-galactosamine + GDP-beta-L-fucose = alpha-L-fucosyl-(1-&gt;2)-beta-D-galactosyl-(1-&gt;3)-N-acetyl-D-galactosamine + GDP + H(+). The protein operates within protein modification; protein glycosylation. Catalyzes the transfer of L-fucose, from a guanosine diphosphate-beta-L-fucose, to the terminal galactose residue of glycoconjugates through an alpha(1,2) linkage leading to H antigen synthesis that is an intermediate substrate in the synthesis of ABO blood group antigens. H antigen is essential for maturation of the glomerular layer of the main olfactory bulb, in cell migration and early cell-cell contacts during tumor associated angiogenesis. Preferentially fucosylates soluble lactose and to a lesser extent fucosylates glycolipids gangliosides GA1 and GM1a. In Homo sapiens (Human), this protein is Galactoside alpha-(1,2)-fucosyltransferase 1.